The sequence spans 194 residues: ATP-dependent Clp protease proteolytic subunit (194 aa).

The Nucleophile role is filled by serine 97. Residue histidine 122 is part of the active site.

Belongs to the peptidase S14 family. As to quaternary structure, fourteen ClpP subunits assemble into 2 heptameric rings which stack back to back to give a disk-like structure with a central cavity, resembling the structure of eukaryotic proteasomes.

The protein localises to the cytoplasm. It catalyses the reaction Hydrolysis of proteins to small peptides in the presence of ATP and magnesium. alpha-casein is the usual test substrate. In the absence of ATP, only oligopeptides shorter than five residues are hydrolyzed (such as succinyl-Leu-Tyr-|-NHMec, and Leu-Tyr-Leu-|-Tyr-Trp, in which cleavage of the -Tyr-|-Leu- and -Tyr-|-Trp bonds also occurs).. Cleaves peptides in various proteins in a process that requires ATP hydrolysis. Has a chymotrypsin-like activity. Plays a major role in the degradation of misfolded proteins. This chain is ATP-dependent Clp protease proteolytic subunit, found in Lactobacillus delbrueckii subsp. bulgaricus (strain ATCC BAA-365 / Lb-18).